Consider the following 245-residue polypeptide: Small ribosomal subunit protein uS2 (245 aa).

The protein belongs to the universal ribosomal protein uS2 family.

The protein is Small ribosomal subunit protein uS2 of Dehalococcoides mccartyi (strain ATCC BAA-2266 / KCTC 15142 / 195) (Dehalococcoides ethenogenes (strain 195)).